Reading from the N-terminus, the 344-residue chain is Follistatin (344 aa).

The first 29 residues, 1–29 (MVCARHQPGGLCLLLLLLCQFMEDRSAQA), serve as a signal peptide directing secretion. Residues 30–103 (GNCWLRQAKN…TCENVDCGPG (74 aa)) enclose the TB domain. Disulfide bonds link C32–C55, C42–C88, C56–C91, C95–C106, C100–C116, C118–C150, C122–C143, C132–C164, C168–C179, C173–C189, C192–C225, C196–C218, C207–C239, C245–C256, C250–C267, C270–C302, C274–C295, and C284–C316. Residues 94–117 (TCENVDCGPGKKCRMNKKNKPRCV) enclose the Follistatin-like 1 domain. The region spanning 112–166 (NKPRCVCAPDCSNITWKGPVCGLDGKTYRNECALLKARCKEQPELEVQYQGKCKK) is the Kazal-like 1 domain. N124 carries an N-linked (GlcNAc...) asparagine glycan. One can recognise a Follistatin-like 2 domain in the interval 167-190 (TCRDVFCPGSSTCVVDQTNNAYCV). Residues 186 to 241 (NAYCVTCNRICPEPSSSEQYLCGNDGVTYSSACHLRKATCLLGRSIGLAYEGKCIK) enclose the Kazal-like 2 domain. Residues 244 to 268 (SCEDIQCGGGKKCLWDSKVGRGRCS) enclose the Follistatin-like 3 domain. Positions 264–318 (RGRCSLCDELCPDSKSDEPVCASDNATYASECAMKEAACSSGVLLEVKHSGSCNS) constitute a Kazal-like 3 domain. N-linked (GlcNAc...) asparagine glycosylation is present at N288. Residues 315 to 344 (SCNSISEETEEEEEEEDQDYSFPISSILEW) form a disordered region. Over residues 321-333 (EETEEEEEEEDQD) the composition is skewed to acidic residues.

In terms of assembly, interacts with GDF11. Interacts with activin A/INHBA. Interacts with myostatin/MSTN.

The protein resides in the secreted. It is found in the nucleus. It localises to the nucleolus. Its function is as follows. Multifunctional regulatory protein whose primary function is to antagonize members of the transforming growth factor beta (TGF-beta) superfamily including activin, myostatin, GDF11 or bone morphogenetic proteins (BMPs). Mechanistically, binds to these ligands in the extracellular space, blocking their type II receptor-binding site to inhibit downstream signaling. Plays an essential role in muscle fiber formation and growth both by preventing the repressive effects of myostatin and through SMAD3/AKT/mTOR signaling independently of myostatin. Also promotes neural differentiation by antagonizing the action BMP4. Acts as a specific inhibitor of the biosynthesis and secretion of pituitary follicle stimulating hormone (FSH) by sequestering activin A/INHBA. On the other hand, translocates into the nucleus where it down-regulates rRNA synthesis and ribosome biogenesis to maintain cellular energy homeostasis by binding to rDNA. In Mus musculus (Mouse), this protein is Follistatin.